The primary structure comprises 95 residues: Aspartyl/glutamyl-tRNA(Asn/Gln) amidotransferase subunit C (95 aa).

It belongs to the GatC family. Heterotrimer of A, B and C subunits.

The catalysed reaction is L-glutamyl-tRNA(Gln) + L-glutamine + ATP + H2O = L-glutaminyl-tRNA(Gln) + L-glutamate + ADP + phosphate + H(+). It carries out the reaction L-aspartyl-tRNA(Asn) + L-glutamine + ATP + H2O = L-asparaginyl-tRNA(Asn) + L-glutamate + ADP + phosphate + 2 H(+). In terms of biological role, allows the formation of correctly charged Asn-tRNA(Asn) or Gln-tRNA(Gln) through the transamidation of misacylated Asp-tRNA(Asn) or Glu-tRNA(Gln) in organisms which lack either or both of asparaginyl-tRNA or glutaminyl-tRNA synthetases. The reaction takes place in the presence of glutamine and ATP through an activated phospho-Asp-tRNA(Asn) or phospho-Glu-tRNA(Gln). The chain is Aspartyl/glutamyl-tRNA(Asn/Gln) amidotransferase subunit C from Chlorobium phaeobacteroides (strain DSM 266 / SMG 266 / 2430).